The sequence spans 211 residues: MNSNVENLPPHVIRQVYKEVSTLTPDPPEGIKIIPNEEDITDVQVSIEGPEGTPYAGGIFRMKLILGKDFPAAPPKGYFLTKIFHPNVSSNGEICVNVLKKDWKAELGIRHVLLTIKCLLIHPNPESALNEEAGRLLLENYEEYASRARLMTEIHAHSSSLRGKDPTDPCSSASVTGALGDGPMAKKHAGDRDKKLAAKKKTDKKRALRRL.

The 147-residue stretch at 11–157 folds into the UBC core domain; it reads HVIRQVYKEV…ARLMTEIHAH (147 aa). Cys95 functions as the Glycyl thioester intermediate in the catalytic mechanism. Positions 157 to 167 are enriched in basic and acidic residues; that stretch reads HSSSLRGKDPT. The interval 157–211 is disordered; it reads HSSSLRGKDPTDPCSSASVTGALGDGPMAKKHAGDRDKKLAAKKKTDKKRALRRL. A compositionally biased stretch (basic residues) spans 197 to 211; it reads AAKKKTDKKRALRRL.

This sequence belongs to the ubiquitin-conjugating enzyme family.

It catalyses the reaction S-ubiquitinyl-[E1 ubiquitin-activating enzyme]-L-cysteine + [E2 ubiquitin-conjugating enzyme]-L-cysteine = [E1 ubiquitin-activating enzyme]-L-cysteine + S-ubiquitinyl-[E2 ubiquitin-conjugating enzyme]-L-cysteine.. Its pathway is protein modification; protein ubiquitination. Catalyzes the covalent attachment of ubiquitin to other proteins. Acts as an essential factor of the anaphase promoting complex/cyclosome (APC/C), a cell cycle-regulated ubiquitin ligase that controls progression through mitosis. Acts by specifically elongating 'Lys-11'-linked polyubiquitin chains initiated by the E2 enzyme ube2c/ubch10 on APC/C substrates, enhancing the degradation of APC/C substrates by the proteasome and promoting mitotic exit. The sequence is that of Ubiquitin-conjugating enzyme E2 S (ube2s) from Aquarana catesbeiana (American bullfrog).